The primary structure comprises 284 residues: P2R1A-PPP2R2A-interacting phosphatase regulator 1 (284 aa).

Disordered stretches follow at residues 1–32, 112–198, and 235–284; these read MAQE…SNSA, EESL…PIKR, and AHTL…LPID. Low complexity-rich tracts occupy residues 152 to 164 and 172 to 184; these read SPSL…SSGL and PTRR…SQSP. Residues 258 to 269 show a composition bias toward polar residues; that stretch reads STGSPVSLSDSR.

It belongs to the FAM122 family.

It is found in the nucleus. Its subcellular location is the cytoplasm. Its function is as follows. Acts as an inhibitor of serine/threonine-protein phosphatase 2A (PP2A) activity. Potentiates ubiquitin-mediated proteasomal degradation of serine/threonine-protein phosphatase 2A catalytic subunit alpha (PPP2CA). Inhibits PP2A-mediated dephosphorylation of WEE1, promoting ubiquitin-mediated proteolysis of WEE1, thereby releasing G2/M checkpoint. The sequence is that of P2R1A-PPP2R2A-interacting phosphatase regulator 1 from Gallus gallus (Chicken).